The sequence spans 234 residues: Small ribosomal subunit protein uS2 (234 aa).

The protein belongs to the universal ribosomal protein uS2 family.

The sequence is that of Small ribosomal subunit protein uS2 from Prochlorococcus marinus subsp. pastoris (strain CCMP1986 / NIES-2087 / MED4).